The primary structure comprises 572 residues: Probable lysosomal cobalamin transporter (572 aa).

9 helical membrane passes run 8-28 (VIWFAYLIVIFVLIVVASVFI), 40-60 (FVTFICVFSIAALLATVMLLP), 95-115 (IIYYSLYFLDALLCFVGIPFA), 145-165 (TLTFIAVVIALVLVGFFAPMM), 188-208 (AFTFLLGFVTIIGSCLYAFYT), 314-334 (GGFCLFLVGLSTWISLLMTVV), 374-394 (IIFALIVFFFFWGSVVGVVAV), 421-441 (AVLTLITLGLNYSIVMMLVPG), and 499-519 (VALNFPLFGALLLWAHFLFLA). The segment at 522–544 (GRRRGRGRESVSKHQKKRQSYMR) is disordered.

This sequence belongs to the LIMR family. LMBRD1 subfamily.

It localises to the lysosome membrane. Functionally, probable lysosomal cobalamin transporter. Required to export cobalamin from lysosomes allowing its conversion to cofactors. The polypeptide is Probable lysosomal cobalamin transporter (Aspergillus fumigatus (strain ATCC MYA-4609 / CBS 101355 / FGSC A1100 / Af293) (Neosartorya fumigata)).